A 163-amino-acid polypeptide reads, in one-letter code: Neurotrophin-3 (163 aa).

The N-terminal stretch at I1–S3 is a signal peptide. Residues T4–R119 constitute a propeptide that is removed on maturation. The N-linked (GlcNAc...) asparagine glycan is linked to N112. Positions T114–S133 are disordered. Positions S123–S133 are enriched in basic and acidic residues.

The protein belongs to the NGF-beta family.

The protein resides in the secreted. Seems to promote the survival of visceral and proprioceptive sensory neurons. The chain is Neurotrophin-3 (NTF3) from Lichanura trivirgata (Rosy boa).